Reading from the N-terminus, the 508-residue chain is Tyrosine decarboxylase 4 (508 aa).

Lys318 carries the post-translational modification N6-(pyridoxal phosphate)lysine.

This sequence belongs to the group II decarboxylase family. In terms of assembly, homodimer. The cofactor is pyridoxal 5'-phosphate.

The enzyme catalyses L-tyrosine + H(+) = tyramine + CO2. This Petroselinum crispum (Parsley) protein is Tyrosine decarboxylase 4 (TYRDC-4).